Here is a 442-residue protein sequence, read N- to C-terminus: Transducin beta-like protein 2 (442 aa).

The tract at residues 36–71 (EKPSQPVCQKENEPKKSGSKKQKQNQRVRKEKPQQH) is disordered. A compositionally biased stretch (basic residues) spans 52–65 (SGSKKQKQNQRVRK). WD repeat units lie at residues 84 to 123 (SHSG…QREH), 130 to 170 (VELD…DGGF), 182 to 222 (KHKA…STIN), 224 to 263 (NQMN…GEFQ), 273 to 312 (GHSA…KKQQ), 323 to 362 (EEAS…KEEY), and 366 to 404 (VHGE…RAVV). Residue Lys164 forms a Glycyl lysine isopeptide (Lys-Gly) (interchain with G-Cter in SUMO2) linkage. The residue at position 428 (Thr428) is a Phosphothreonine.

The protein is Transducin beta-like protein 2 (Tbl2) of Mus musculus (Mouse).